The primary structure comprises 179 residues: MARLLEYYRDTVTKELTQKFNYKTVMEVPKITKITLNMGVGEASTDKKIIENAVSDLEKISAQKPVVTKARKSIATFKVRQGYPVGCKVTLRGVKMYEFLDRLVNVAIPRIRDFRGIQVKGFDGRGNFNMGIKEQIIFPEIDYDKIDKVRGLNITVTTTAKTDQEARALLSAFKFPFKN.

It belongs to the universal ribosomal protein uL5 family. Part of the 50S ribosomal subunit; part of the 5S rRNA/L5/L18/L25 subcomplex. Contacts the 5S rRNA and the P site tRNA. Forms a bridge to the 30S subunit in the 70S ribosome.

In terms of biological role, this is one of the proteins that bind and probably mediate the attachment of the 5S RNA into the large ribosomal subunit, where it forms part of the central protuberance. In the 70S ribosome it contacts protein S13 of the 30S subunit (bridge B1b), connecting the 2 subunits; this bridge is implicated in subunit movement. Contacts the P site tRNA; the 5S rRNA and some of its associated proteins might help stabilize positioning of ribosome-bound tRNAs. This chain is Large ribosomal subunit protein uL5, found in Nitrosomonas europaea (strain ATCC 19718 / CIP 103999 / KCTC 2705 / NBRC 14298).